Reading from the N-terminus, the 477-residue chain is Aspartyl/glutamyl-tRNA(Asn/Gln) amidotransferase subunit B (477 aa).

This sequence belongs to the GatB/GatE family. GatB subfamily. As to quaternary structure, heterotrimer of A, B and C subunits.

The enzyme catalyses L-glutamyl-tRNA(Gln) + L-glutamine + ATP + H2O = L-glutaminyl-tRNA(Gln) + L-glutamate + ADP + phosphate + H(+). It catalyses the reaction L-aspartyl-tRNA(Asn) + L-glutamine + ATP + H2O = L-asparaginyl-tRNA(Asn) + L-glutamate + ADP + phosphate + 2 H(+). Allows the formation of correctly charged Asn-tRNA(Asn) or Gln-tRNA(Gln) through the transamidation of misacylated Asp-tRNA(Asn) or Glu-tRNA(Gln) in organisms which lack either or both of asparaginyl-tRNA or glutaminyl-tRNA synthetases. The reaction takes place in the presence of glutamine and ATP through an activated phospho-Asp-tRNA(Asn) or phospho-Glu-tRNA(Gln). This chain is Aspartyl/glutamyl-tRNA(Asn/Gln) amidotransferase subunit B, found in Streptococcus sanguinis (strain SK36).